We begin with the raw amino-acid sequence, 456 residues long: tRNA-2-methylthio-N(6)-dimethylallyladenosine synthase (456 aa).

Residues K19 to V137 form the MTTase N-terminal domain. [4Fe-4S] cluster-binding residues include C28, C64, C98, C174, C178, and C181. The 233-residue stretch at R160–N392 folds into the Radical SAM core domain. The 64-residue stretch at K393 to E456 folds into the TRAM domain.

Belongs to the methylthiotransferase family. MiaB subfamily. As to quaternary structure, monomer. [4Fe-4S] cluster is required as a cofactor.

Its subcellular location is the cytoplasm. The enzyme catalyses N(6)-dimethylallyladenosine(37) in tRNA + (sulfur carrier)-SH + AH2 + 2 S-adenosyl-L-methionine = 2-methylsulfanyl-N(6)-dimethylallyladenosine(37) in tRNA + (sulfur carrier)-H + 5'-deoxyadenosine + L-methionine + A + S-adenosyl-L-homocysteine + 2 H(+). In terms of biological role, catalyzes the methylthiolation of N6-(dimethylallyl)adenosine (i(6)A), leading to the formation of 2-methylthio-N6-(dimethylallyl)adenosine (ms(2)i(6)A) at position 37 in tRNAs that read codons beginning with uridine. The polypeptide is tRNA-2-methylthio-N(6)-dimethylallyladenosine synthase (Clostridium botulinum (strain Eklund 17B / Type B)).